Consider the following 110-residue polypeptide: Protein C-ets-2 (110 aa).

The segment at residues 1–84 is a DNA-binding region (ETS); it reads SGPIQLWQFL…AGKRYVYRFV (84 aa).

It belongs to the ETS family.

The protein localises to the nucleus. Functionally, probable transcription factor. This is Protein C-ets-2 (ETS-2) from Lytechinus variegatus (Green sea urchin).